Reading from the N-terminus, the 408-residue chain is NADH-quinone oxidoreductase subunit D (408 aa).

It belongs to the complex I 49 kDa subunit family. As to quaternary structure, NDH-1 is composed of 14 different subunits. Subunits NuoB, C, D, E, F, and G constitute the peripheral sector of the complex.

It localises to the cell inner membrane. The enzyme catalyses a quinone + NADH + 5 H(+)(in) = a quinol + NAD(+) + 4 H(+)(out). NDH-1 shuttles electrons from NADH, via FMN and iron-sulfur (Fe-S) centers, to quinones in the respiratory chain. The immediate electron acceptor for the enzyme in this species is believed to be ubiquinone. Couples the redox reaction to proton translocation (for every two electrons transferred, four hydrogen ions are translocated across the cytoplasmic membrane), and thus conserves the redox energy in a proton gradient. The chain is NADH-quinone oxidoreductase subunit D from Campylobacter hominis (strain ATCC BAA-381 / DSM 21671 / CCUG 45161 / LMG 19568 / NCTC 13146 / CH001A).